A 211-amino-acid chain; its full sequence is Ribosomal RNA small subunit methyltransferase G (211 aa).

S-adenosyl-L-methionine contacts are provided by residues Gly72, Phe77, 125–126 (IE), and Arg141.

The protein belongs to the methyltransferase superfamily. RNA methyltransferase RsmG family.

It localises to the cytoplasm. It carries out the reaction guanosine(527) in 16S rRNA + S-adenosyl-L-methionine = N(7)-methylguanosine(527) in 16S rRNA + S-adenosyl-L-homocysteine. Its function is as follows. Specifically methylates the N7 position of guanine in position 527 of 16S rRNA. The chain is Ribosomal RNA small subunit methyltransferase G from Allorhizobium ampelinum (strain ATCC BAA-846 / DSM 112012 / S4) (Agrobacterium vitis (strain S4)).